The primary structure comprises 324 residues: Spheroidene monooxygenase (324 aa).

The disordered stretch occupies residues 226–324 (GKDPVGEALT…PGKGGRKENA (99 aa)). 2 stretches are compositionally biased toward low complexity: residues 248–278 (PAAA…VEMP) and 287–313 (VVEA…NFKG).

Belongs to the CrtA family. Heme is required as a cofactor.

The enzyme catalyses spheroidene + 4 reduced [2Fe-2S]-[ferredoxin] + 2 O2 + 4 H(+) = spheroiden-2-one + 4 oxidized [2Fe-2S]-[ferredoxin] + 3 H2O. It catalyses the reaction spheroidene + 2 reduced [2Fe-2S]-[ferredoxin] + O2 + 2 H(+) = 2-hydroxyspheroidene + 2 oxidized [2Fe-2S]-[ferredoxin] + H2O. It carries out the reaction 2-hydroxyspheroidene + 2 reduced [2Fe-2S]-[ferredoxin] + O2 + 2 H(+) = 2,2-dihydroxyspheroidene + 2 oxidized [2Fe-2S]-[ferredoxin] + H2O. The catalysed reaction is 2,2-dihydroxyspheroidene = spheroiden-2-one + H2O. It participates in carotenoid biosynthesis; spheroidene biosynthesis. Functionally, involved in the biosynthesis of the carotenoid spheroidene. Catalyzes the introduction of one keto group at the C-2 position of spheroidene. In vitro, can use nonnative substrates and produce oxocarotenoids with a hydroxy and/or a keto group, derived from neurosporene, lycopene, 3,4-didehydrolycopene or 3,4,3',4'-tetradehydrolycopene. The chain is Spheroidene monooxygenase from Cereibacter sphaeroides (strain ATCC 17023 / DSM 158 / JCM 6121 / CCUG 31486 / LMG 2827 / NBRC 12203 / NCIMB 8253 / ATH 2.4.1.) (Rhodobacter sphaeroides).